Consider the following 240-residue polypeptide: Bactofilin BacP (240 aa).

The segment at D116–R240 is interacts with PadC. The segment at V117 to R240 is disordered. Residues R126–A150 show a composition bias toward low complexity. The segment covering R151–P173 has biased composition (pro residues). The segment covering A229 to R240 has biased composition (basic residues).

Belongs to the bactofilin family. In terms of assembly, interacts with BacN and probably also BacO, the 3 proteins colocalize as an extended structure. Interacts with PadC.

Its subcellular location is the cytoplasm. The protein localises to the cytoskeleton. Its function is as follows. A non-essential component of the chromosome segregation machinery. Positions the ParA-ParB-parS chromosome segregation machinery within the cell; BacP seems to be the most important bactofilin in this process. Forms a heteropolymeric, subpolar scaffold in the cell; BacP probably forms the core, BacO contributes to position and integrity while BacN does not seem to contribute to assembly. The protein is Bactofilin BacP of Myxococcus xanthus (strain DK1622).